The primary structure comprises 540 residues: Probable ATP-dependent RNA helicase DDX28 (540 aa).

A Mitochondrial targeting signal motif is present at residues 3-18 (LAGPSRLLALAVRLLL). The short motif at 126 to 156 (GSFVDLGLEPRVLLALQEAVPEVVQPTSVQS) is the Q motif element. Residues 159–351 (IPPLLRGRHL…SKVTSPDSLT (193 aa)) enclose the Helicase ATP-binding domain. Residue 172-179 (AETGSGKT) participates in ATP binding. Residues 180-191 (LSYLLPLFQRLL) carry the Nuclear export signal motif. The short motif at 286–289 (DEVD) is the DEAD element. One can recognise a Helicase C-terminal domain in the interval 377-536 (KVTELVQILK…GLASSVGDPL (160 aa)). The Nuclear localization signal signature appears at 520-523 (RRRR).

It belongs to the DEAD box helicase family. As to quaternary structure, monomer. Found in a complex with GRSF1, DHX30, FASTKD2 and FASTKD5. Associates with the 16S mitochondrial rRNA (16S mt-rRNA) and with the mitochondrial ribosome large subunit (39S).

The protein resides in the nucleus. Its subcellular location is the mitochondrion. The protein localises to the mitochondrion matrix. It localises to the mitochondrion nucleoid. It carries out the reaction ATP + H2O = ADP + phosphate + H(+). Functionally, plays an essential role in facilitating the proper assembly of the mitochondrial large ribosomal subunit and its helicase activity is essential for this function. May be involved in RNA processing or transport. Has RNA and Mg(2+)-dependent ATPase activity. This chain is Probable ATP-dependent RNA helicase DDX28 (Ddx28), found in Mus musculus (Mouse).